The chain runs to 268 residues: MQVLIFDDKKAVAENAATLLQKLILAKNNANIGLATGSTPIDLYKQLVSMYKNKHISFAQVNTFNLDEYYDIDENNSNSYRYFMNSQLFDHIDIDKNNTHLPTCNAKQDPRKQGEHFEQQIAALGGLDLQLLGIGGNGHIGFNEPSSSFASRTRIKSLTEQTVSDNSRMFSDDEQQPKMAMTMGIATIMDAKYVLLIATGKNKAQAVNDMVNGPLSASCPASILQMHKNAIVIIDNDAASLLANKDYFTWVSQQNHEINQAFGHFPDL.

D67 serves as the catalytic Proton acceptor; for enolization step. The active-site For ring-opening step is N137. Residue H139 is the Proton acceptor; for ring-opening step of the active site. The active-site For ring-opening step is the E144.

Belongs to the glucosamine/galactosamine-6-phosphate isomerase family. NagB subfamily. Homohexamer.

It carries out the reaction alpha-D-glucosamine 6-phosphate + H2O = beta-D-fructose 6-phosphate + NH4(+). It functions in the pathway amino-sugar metabolism; N-acetylneuraminate degradation; D-fructose 6-phosphate from N-acetylneuraminate: step 5/5. Catalyzes the reversible isomerization-deamination of glucosamine 6-phosphate (GlcN6P) to form fructose 6-phosphate (Fru6P) and ammonium ion. The chain is Glucosamine-6-phosphate deaminase from Pseudoalteromonas translucida (strain TAC 125).